A 190-amino-acid chain; its full sequence is Translation initiation factor IF-3 (190 aa).

This sequence belongs to the IF-3 family. As to quaternary structure, monomer.

It is found in the cytoplasm. Its function is as follows. IF-3 binds to the 30S ribosomal subunit and shifts the equilibrium between 70S ribosomes and their 50S and 30S subunits in favor of the free subunits, thus enhancing the availability of 30S subunits on which protein synthesis initiation begins. The sequence is that of Translation initiation factor IF-3 from Prochlorococcus marinus subsp. pastoris (strain CCMP1986 / NIES-2087 / MED4).